The sequence spans 472 residues: Na(+)/H(+) antiporter NhaA 1 (472 aa).

The next 11 membrane-spanning stretches (helical) occupy residues 34–54 (TASI…NSQW), 86–106 (GLMV…CLVG), 116–136 (LVIA…AGVA), 146–166 (GWGI…ALLG), 175–195 (VTLS…IGLF), 203–223 (TSLM…VLGF), 227–247 (IFYL…GVHA), 324–344 (PVSL…ALPD), 353–373 (VVFI…ISVF), 394–414 (VFAL…IASL), and 428–448 (LGIL…FLMI).

Belongs to the NhaA Na(+)/H(+) (TC 2.A.33) antiporter family.

The protein resides in the cell inner membrane. The catalysed reaction is Na(+)(in) + 2 H(+)(out) = Na(+)(out) + 2 H(+)(in). Functionally, na(+)/H(+) antiporter that extrudes sodium in exchange for external protons. The protein is Na(+)/H(+) antiporter NhaA 1 of Pseudoalteromonas atlantica (strain T6c / ATCC BAA-1087).